We begin with the raw amino-acid sequence, 79 residues long: VQKRTIIMEKKMAGFCIFFLILFLAQEYGVEGKECLNLSDKFKGPCLGSKNCDHHCRDIEHLLSGVCRDDFRCWCNRKC.

A signal peptide spans 1–32 (VQKRTIIMEKKMAGFCIFFLILFLAQEYGVEG). Disulfide bonds link Cys35–Cys79, Cys46–Cys67, and Cys52–Cys73.

It belongs to the DEFL family. May form dimers. In terms of processing, not glycosylated. Has 4 disulfide bonds.

Probably has antifungal activity. The sequence is that of Defensin 2 from Arachis hypogaea (Peanut).